Reading from the N-terminus, the 507-residue chain is Arylsulfatase A (507 aa).

The N-terminal stretch at 1–18 is a signal peptide; sequence MGAPRSLLLALAAGLAVA. Residues Asp29, Asp30, and Cys69 each contribute to the Ca(2+) site. Catalysis depends on Cys69, which acts as the Nucleophile. Cys69 is modified (3-oxoalanine (Cys)). Lys123 is a substrate binding site. His125 is a catalytic residue. Ser150 lines the substrate pocket. 2 disulfides stabilise this stretch: Cys156–Cys172 and Cys161–Cys168. Asn158 is a glycosylation site (N-linked (GlcNAc...) asparagine). The N-linked (GlcNAc...) asparagine glycan is linked to Asn184. His229 lines the substrate pocket. Ca(2+) contacts are provided by Asp281 and Asn282. 4 disulfide bridges follow: Cys300/Cys414, Cys488/Cys500, Cys489/Cys502, and Cys493/Cys499. Lys302 is a substrate binding site. Asn350 is a glycosylation site (N-linked (GlcNAc...) asparagine).

Belongs to the sulfatase family. Homodimer at neutral pH and homooctamer at acidic pH. Exists both as a single chain of 58 kDa (component A) or as a chain of 50 kDa (component B) linked by disulfide bond(s) to a 7 kDa chain (component C). Interacts with SUMF1. Ca(2+) serves as cofactor. The conversion to 3-oxoalanine (also known as C-formylglycine, FGly), of a serine or cysteine residue in prokaryotes and of a cysteine residue in eukaryotes, is critical for catalytic activity. This post-translational modification is severely defective in multiple sulfatase deficiency (MSD).

Its subcellular location is the endoplasmic reticulum. It localises to the lysosome. It carries out the reaction an N-acyl-1-beta-D-(3-O-sulfo)-galactosyl-sphing-4-enine + H2O = a beta-D-galactosyl-(1&lt;-&gt;1')-N-acylsphing-4-enine + sulfate + H(+). Inhibited by phosphate. The phosphate forms a covalent bond with the active site 3-oxoalanine. Hydrolyzes cerebroside sulfate. This is Arylsulfatase A (ARSA) from Homo sapiens (Human).